A 464-amino-acid chain; its full sequence is Purple acid phosphatase (464 aa).

The signal sequence occupies residues 1–30 (MGVVEGLLALALVLSACVMCNGGSSSPFIR). 2 N-linked (GlcNAc...) asparagine glycosylation sites follow: N108 and N136. D162 serves as a coordination point for Fe cation. N170 carries an N-linked (GlcNAc...) asparagine glycan. Fe cation contacts are provided by D191 and Y194. Position 191 (D191) interacts with Zn(2+). N228 contributes to the Zn(2+) binding site. N228 serves as a coordination point for substrate. An N-linked (GlcNAc...) asparagine glycan is attached at N301. H313 is a Zn(2+) binding site. H323 acts as the Proton donor in catalysis. H350 is a binding site for Zn(2+). 350–352 (HVH) contributes to the substrate binding site. Fe cation is bound at residue H352. N-linked (GlcNAc...) asparagine glycosylation is found at N398 and N423.

Belongs to the metallophosphoesterase superfamily. Purple acid phosphatase family. As to quaternary structure, homodimer; disulfide-linked. Fe cation is required as a cofactor. Requires Zn(2+) as cofactor. The cofactor is Mn(2+). Cu(2+) serves as cofactor. It depends on Mg(2+) as a cofactor.

The protein resides in the secreted. The enzyme catalyses a phosphate monoester + H2O = an alcohol + phosphate. This is Purple acid phosphatase from Glycine max (Soybean).